A 448-amino-acid polypeptide reads, in one-letter code: Tubulin beta chain (448 aa).

Residues glutamine 11, glutamate 69, serine 138, glycine 142, threonine 143, glycine 144, asparagine 204, and asparagine 226 each coordinate GTP. Glutamate 69 lines the Mg(2+) pocket. Residues 425–448 form a disordered region; that stretch reads YQDAGVDEEEEEYDEEAPVEEPLE. Residues 429 to 448 are compositionally biased toward acidic residues; it reads GVDEEEEEYDEEAPVEEPLE.

Belongs to the tubulin family. In terms of assembly, dimer of alpha and beta chains. A typical microtubule is a hollow water-filled tube with an outer diameter of 25 nm and an inner diameter of 15 nM. Alpha-beta heterodimers associate head-to-tail to form protofilaments running lengthwise along the microtubule wall with the beta-tubulin subunit facing the microtubule plus end conferring a structural polarity. Microtubules usually have 13 protofilaments but different protofilament numbers can be found in some organisms and specialized cells. Mg(2+) serves as cofactor.

It localises to the cytoplasm. It is found in the cytoskeleton. Its function is as follows. Tubulin is the major constituent of microtubules, a cylinder consisting of laterally associated linear protofilaments composed of alpha- and beta-tubulin heterodimers. Microtubules grow by the addition of GTP-tubulin dimers to the microtubule end, where a stabilizing cap forms. Below the cap, tubulin dimers are in GDP-bound state, owing to GTPase activity of alpha-tubulin. The protein is Tubulin beta chain of Metarhizium anisopliae (Entomophthora anisopliae).